Consider the following 336-residue polypeptide: Sex determination protein tasselseed-2 (336 aa).

59 to 83 (IVTGGARGIGEAIVRLFAKHGARVV) contributes to the NAD(+) binding site. Ser-194 contacts substrate. The active-site Proton acceptor is Tyr-207.

It belongs to the short-chain dehydrogenases/reductases (SDR) family.

In terms of biological role, required for stage-specific floral organ abortion. In Zea mays (Maize), this protein is Sex determination protein tasselseed-2 (TS2).